Here is a 158-residue protein sequence, read N- to C-terminus: 3-hydroxyacyl-[acyl-carrier-protein] dehydratase FabZ (158 aa).

H57 is a catalytic residue.

Belongs to the thioester dehydratase family. FabZ subfamily.

It localises to the cytoplasm. The enzyme catalyses a (3R)-hydroxyacyl-[ACP] = a (2E)-enoyl-[ACP] + H2O. In terms of biological role, involved in unsaturated fatty acids biosynthesis. Catalyzes the dehydration of short chain beta-hydroxyacyl-ACPs and long chain saturated and unsaturated beta-hydroxyacyl-ACPs. In Helicobacter acinonychis (strain Sheeba), this protein is 3-hydroxyacyl-[acyl-carrier-protein] dehydratase FabZ.